The primary structure comprises 755 residues: Glucosylglycerol-phosphate synthase (755 aa).

This sequence belongs to the glycosyltransferase 20 family.

It catalyses the reaction ADP-alpha-D-glucose + sn-glycerol 3-phosphate = 2-O-(alpha-D-glucopyranosyl)-sn-glycerol 3-phosphate + ADP + H(+). It functions in the pathway glycan metabolism; glucosylglycerol biosynthesis. Functionally, involved in salt tolerance by producing GG-phosphate from ADP-glucose and glycerol-3-phosphate (G3P), an intermediate in the synthesis of the osmolyte glucosylglycerol (GG). In Pseudomonas anguilliseptica, this protein is Glucosylglycerol-phosphate synthase (ggpS).